A 66-amino-acid chain; its full sequence is Large ribosomal subunit protein bL35 (66 aa).

Belongs to the bacterial ribosomal protein bL35 family.

The polypeptide is Large ribosomal subunit protein bL35 (Caulobacter sp. (strain K31)).